The primary structure comprises 116 residues: uncharacterized protein (116 aa).

Residues 6–60 (LKKCRKQKKLTQQNMADKLGITRPAYTAYELGSREPDYKTLINISNILDVSLDYL) enclose the HTH cro/C1-type domain. The segment at residues 17–36 (QQNMADKLGITRPAYTAYEL) is a DNA-binding region (H-T-H motif).

This is an uncharacterized protein from Bacillus subtilis (strain 168).